We begin with the raw amino-acid sequence, 215 residues long: ATP-dependent dethiobiotin synthetase BioD (215 aa).

13–18 lines the ATP pocket; that stretch reads DIGKTV. Residue Thr-17 coordinates Mg(2+). Lys-38 is a catalytic residue. Thr-42 contacts substrate. Residues Asp-50, 115–118, and 175–176 contribute to the ATP site; these read EGAG and NH. The Mg(2+) site is built by Asp-50 and Glu-115.

It belongs to the dethiobiotin synthetase family. As to quaternary structure, homodimer. Mg(2+) serves as cofactor.

It is found in the cytoplasm. It carries out the reaction (7R,8S)-7,8-diammoniononanoate + CO2 + ATP = (4R,5S)-dethiobiotin + ADP + phosphate + 3 H(+). The protein operates within cofactor biosynthesis; biotin biosynthesis; biotin from 7,8-diaminononanoate: step 1/2. Catalyzes a mechanistically unusual reaction, the ATP-dependent insertion of CO2 between the N7 and N8 nitrogen atoms of 7,8-diaminopelargonic acid (DAPA, also called 7,8-diammoniononanoate) to form a ureido ring. This Neisseria gonorrhoeae (strain NCCP11945) protein is ATP-dependent dethiobiotin synthetase BioD.